The sequence spans 62 residues: MDMKKLIERINFLYKKSKEEGLTKEEKVEQQKLRREYTDIIKGNVKVQLEGVEKIPTPNRKN.

The protein belongs to the UPF0291 family.

The protein localises to the cytoplasm. In Clostridium botulinum (strain ATCC 19397 / Type A), this protein is UPF0291 protein CLB_2550.